Here is a 208-residue protein sequence, read N- to C-terminus: MSKLLVVKAHPLTKEESRSVRALETFLASYRETNPSDEIEILDVYAPETNMPEIDEELLSAWGALRAGAAFETLSENQQQKVARFNELTDQFLSADKVVIANPMWNLNVPTRLKAWVDTINVAGKTFQYTAEGPKPLTSGKKALHIQSNGGFYEGKDFASQYIKAILNFIGVDQVDGLFIEGIDHFPDRAEELLNTAMTKATEYGKTF.

FMN contacts are provided by residues H10, 17 to 19 (SRS), 104 to 107 (MWNL), 148 to 153 (SNGGFY), and D184.

Belongs to the azoreductase type 1 family. As to quaternary structure, homodimer. It depends on FMN as a cofactor.

It catalyses the reaction 2 a quinone + NADH + H(+) = 2 a 1,4-benzosemiquinone + NAD(+). The catalysed reaction is N,N-dimethyl-1,4-phenylenediamine + anthranilate + 2 NAD(+) = 2-(4-dimethylaminophenyl)diazenylbenzoate + 2 NADH + 2 H(+). Quinone reductase that provides resistance to thiol-specific stress caused by electrophilic quinones. Functionally, also exhibits azoreductase activity. Catalyzes the reductive cleavage of the azo bond in aromatic azo compounds to the corresponding amines. Requires NADH, but not NADPH, as an electron donor for its activity. The enzyme can also reduce a wide range of sulfonated azo dyes. The substrate preference order is methyl Red &gt; Orange II &gt; Ponceau BS &gt; Ponceau S &gt; Orange G &gt; Amaranth. The protein is FMN-dependent NADH:quinone oxidoreductase of Enterococcus faecalis (strain ATCC 700802 / V583).